A 469-amino-acid polypeptide reads, in one-letter code: Keratin, type I cytoskeletal 16 (469 aa).

Positions 1-20 (MATCSRQFTSSSSMKGSCGI) are disordered. The tract at residues 1 to 112 (MATCSRQFTS…GIGDGLLVGS (112 aa)) is head. A coil 1A region spans residues 113–148 (EKVTMQNLNDRLATYLDKVRALEEANRDLEVKIRDW). Residues 113-424 (EKVTMQNLND…RLLDGENIHS (312 aa)) enclose the IF rod domain. A linker 1 region spans residues 149 to 166 (YQRQRPTEIKDYSPYFKT). The interval 167 to 258 (IEDLKSKIII…KNHEEEMLAL (92 aa)) is coil 1B. Residues 259–281 (RGQTGGDVNVEMDAAPGVDLSRI) form a linker 12 region. The coil 2 stretch occupies residues 282 to 420 (LNEMRDQYEQ…ATYRRLLDGE (139 aa)). Residues 421–469 (NIHSSSQHSSGQSYSSREVFSSSSRQPRSILKEQGSTSFSQSQSQSSRD) are tail. Residues 422 to 469 (IHSSSQHSSGQSYSSREVFSSSSRQPRSILKEQGSTSFSQSQSQSSRD) form a disordered region. 2 stretches are compositionally biased toward low complexity: residues 423 to 444 (HSSS…SSSS) and 454 to 469 (QGST…SSRD).

This sequence belongs to the intermediate filament family. Heterodimer of a type I and a type II keratin. KRT16 associates with KRT6 isomers (KRT6A or KRT6B). Interacts with TCHP. Interacts with TRADD. In terms of tissue distribution, expressed in the epithelia of the tongue, upper and lower palate, footpad, proximal nail fold and nail bed, penile spine, sweat gland ducts, and back epidermis (at protein level). Expressed in upper suprabasal layers of the corneal epithelium (at protein level). Expressed in internal stratified epithelia in the esophagus and vagina (at protein level). Expressed in transitional stratified squamous epithelia in the forestomach, anal canal, and nasal cavity (at protein level). Expressed in transitional epithelia of the ureter, bladder and urethra (at protein level). In mature hair follicles, expressed in the companion layer of the outer root sheath during anagen and in the club hair sheath during catagen and telogen (at protein level).

Its function is as follows. Epidermis-specific type I keratin that plays a key role in skin. Acts as a regulator of innate immunity in response to skin barrier breach: required for some inflammatory checkpoint for the skin barrier maintenance. The polypeptide is Keratin, type I cytoskeletal 16 (Krt16) (Mus musculus (Mouse)).